The following is a 229-amino-acid chain: Ribonuclease 3 (229 aa).

The RNase III domain maps to 7-132 (LRAFESRIGH…VIAAVYLDAG (126 aa)). Residue Glu45 participates in Mg(2+) binding. Asp49 is an active-site residue. 2 residues coordinate Mg(2+): Asp118 and Glu121. Glu121 is an active-site residue. Residues 157–226 (DAKTALQEWA…ARALLARMEA (70 aa)) enclose the DRBM domain.

The protein belongs to the ribonuclease III family. Homodimer. Requires Mg(2+) as cofactor.

It localises to the cytoplasm. It catalyses the reaction Endonucleolytic cleavage to 5'-phosphomonoester.. In terms of biological role, digests double-stranded RNA. Involved in the processing of primary rRNA transcript to yield the immediate precursors to the large and small rRNAs (23S and 16S). Processes some mRNAs, and tRNAs when they are encoded in the rRNA operon. Processes pre-crRNA and tracrRNA of type II CRISPR loci if present in the organism. The protein is Ribonuclease 3 of Cereibacter sphaeroides (strain ATCC 17025 / ATH 2.4.3) (Rhodobacter sphaeroides).